The following is a 151-amino-acid chain: Large ribosomal subunit protein uL15 (151 aa).

A disordered region spans residues 1 to 58 (MTSISLDSLKPNKGARKRKTRKGRGIAAGQGASCGFGMRGQKSRSGRPTRPGFEGGQM). The segment covering 13–24 (KGARKRKTRKGR) has biased composition (basic residues). The segment covering 26 to 38 (IAAGQGASCGFGM) has biased composition (gly residues).

It belongs to the universal ribosomal protein uL15 family. As to quaternary structure, part of the 50S ribosomal subunit.

Binds to the 23S rRNA. In Prochlorococcus marinus (strain SARG / CCMP1375 / SS120), this protein is Large ribosomal subunit protein uL15.